Reading from the N-terminus, the 125-residue chain is Neuraminyllactose-binding hemagglutinin (125 aa).

The interval lysine 92 to lysine 97 is N-acetyl-neuraminyl-alpha(2,3)-lactose binding motif.

It is found in the cell outer membrane. The polypeptide is Neuraminyllactose-binding hemagglutinin (hpaA) (Helicobacter pylori (Campylobacter pylori)).